Here is a 186-residue protein sequence, read N- to C-terminus: MELEAVLKERTAAAGDPGRVLGAWVRRGWATAGPGVLESDGGSGGTLAFESTSSSRILELTSDNDPEYEALPEGSNVTAHMLAGAVAGVMEHCLMYPVDCVKTRMQSLQPDPAARYRNVMDALSKIVRTEGFWRPLRGLNVTATGAGPAHALYFACYEKLKKTLSDIIHPGGNCHVANGIDNSCPA.

A Solcar repeat occupies 75-163 (SNVTAHMLAG…FACYEKLKKT (89 aa)). 3 helical membrane passes run 77-96 (VTAH…CLMY), 137-157 (RGLN…FACY), and 172-185 (GNCH…NSCP).

Belongs to the mitochondrial carrier (TC 2.A.29) family.

It is found in the mitochondrion inner membrane. It carries out the reaction Fe(2+)(in) = Fe(2+)(out). In terms of biological role, mitochondrial iron transporter that mediates iron uptake. Probably required for heme synthesis of hemoproteins and Fe-S cluster assembly in non-erythroid cells. The sequence is that of Mitoferrin-2B (slc25a28-b) from Xenopus laevis (African clawed frog).